The sequence spans 55 residues: Large ribosomal subunit protein bL33 (55 aa).

Belongs to the bacterial ribosomal protein bL33 family.

The polypeptide is Large ribosomal subunit protein bL33 (Rhizobium etli (strain CIAT 652)).